The sequence spans 448 residues: Tumor necrosis factor receptor superfamily member EDAR (448 aa).

A signal peptide spans 1-26 (MAHVGDCKWMSWLPVLVVSLMCSAKA). At 27–187 (EDSNCGENEY…LSGQGHLATA (161 aa)) the chain is on the extracellular side. TNFR-Cys repeat units follow at residues 30–71 (NCGE…DYGC), 73–113 (PCPA…DAEC), and 115–150 (PCLP…ECVG). Disulfide bonds link cysteine 31–cysteine 44, cysteine 47–cysteine 60, cysteine 50–cysteine 71, cysteine 74–cysteine 87, cysteine 93–cysteine 113, and cysteine 135–cysteine 148. Asparagine 38 is a glycosylation site (N-linked (GlcNAc...) asparagine). A helical membrane pass occupies residues 188 to 208 (LIIAMSTIFIMAIAIVLIIMF). Topologically, residues 209–448 (YIMKTKPSAP…PPASPPPAAS (240 aa)) are cytoplasmic. Over residues 220-229 (CCSSPPGKSA) the composition is skewed to low complexity. The interval 220–297 (CCSSPPGKSA…EEPAPDKQGS (78 aa)) is disordered. Over residues 258 to 283 (LTATPTKTPKSENDASSENEQLLSRS) the composition is skewed to polar residues. The region spanning 358 to 431 (RMLSSTYNSE…DAVESLCADI (74 aa)) is the Death domain.

As to quaternary structure, binds to EDARADD. Associates with TRAF1, TRAF2, TRAF3 and NIK.

It localises to the membrane. In terms of biological role, receptor for EDA isoform TAA, but not for EDA isoform TA-2. May mediate the activation of NF-kappa-B and JNK. May promote caspase-independent cell death. The sequence is that of Tumor necrosis factor receptor superfamily member EDAR (Edar) from Mus musculus (Mouse).